Consider the following 349-residue polypeptide: N-acetyltaurine hydrolase (349 aa).

A divalent metal cation is bound by residues His-26, His-28, Glu-169, His-201, His-230, and Asp-298.

The protein belongs to the metallo-dependent hydrolases superfamily. Phosphotriesterase family. A divalent metal cation serves as cofactor. As to expression, expressed in the kidney, liver and brainstem.

The protein resides in the cytoplasm. The protein localises to the cytosol. It catalyses the reaction N-acetyltaurine + H2O = taurine + acetate. It carries out the reaction N-propanoyltaurine + H2O = propanoate + taurine. The enzyme catalyses N-acetyl-L-methionine + H2O = L-methionine + acetate. The catalysed reaction is N-acetyl-L-isoleucine + H2O = L-isoleucine + acetate. It catalyses the reaction N-acetyl-L-leucine + H2O = L-leucine + acetate. It carries out the reaction N-acetyl-L-valine + H2O = L-valine + acetate. N-acetyltaurine hydrolase that regulates feeding by catalyzing the hydrolysis of N-acetyltaurine into taurine and acetate. N-acetyltaurine has anorexigenic and anti-obesity effects that are dependent on GFRAL receptor and GDF15. PTER also acts on other N-acetyl amino acids (Met, Ile, Leu, Val) and N-propionyltaurine, but at lower rates. The chain is N-acetyltaurine hydrolase from Mus musculus (Mouse).